A 576-amino-acid chain; its full sequence is Arginine--tRNA ligase (576 aa).

The 'HIGH' region motif lies at 122–132 (PNVAKQMHVGH).

It belongs to the class-I aminoacyl-tRNA synthetase family. In terms of assembly, monomer.

It is found in the cytoplasm. It carries out the reaction tRNA(Arg) + L-arginine + ATP = L-arginyl-tRNA(Arg) + AMP + diphosphate. This is Arginine--tRNA ligase from Yersinia pestis bv. Antiqua (strain Antiqua).